The chain runs to 336 residues: MALSDRLLNAWYNGHPALKLLRPLECLYRRVVTGKRQRFLAGEGAIYQPPVPLIVVGNITVGGTGKTPLILWLVEHCQRLGLRVGVVSRGYGAKPAQLPWRVSAEDCAAVAGDEPLLIVQRCGVPLMIDPDRGRAVQALLAAEPLDLILSDDGLQHYRLARDLELVLIDAARGLGNRRCLPAGPLREPAERLQSVDAVLYNGAVDDRDDGFAFHLKPSVLVNLRSGERRALEHFAPGQALHAVAGIGNPQRFFNTLETLHWRPVPHAFADHAQYSAQALTFTPSLPLVMTEKDAVKCRAFAADDWWYLAVDAQPSPAFVAWFDTQLMRLLPDRLLP.

60–67 contributes to the ATP binding site; sequence TVGGTGKT.

This sequence belongs to the LpxK family.

The enzyme catalyses a lipid A disaccharide + ATP = a lipid IVA + ADP + H(+). It participates in glycolipid biosynthesis; lipid IV(A) biosynthesis; lipid IV(A) from (3R)-3-hydroxytetradecanoyl-[acyl-carrier-protein] and UDP-N-acetyl-alpha-D-glucosamine: step 6/6. Transfers the gamma-phosphate of ATP to the 4'-position of a tetraacyldisaccharide 1-phosphate intermediate (termed DS-1-P) to form tetraacyldisaccharide 1,4'-bis-phosphate (lipid IVA). The protein is Tetraacyldisaccharide 4'-kinase of Pseudomonas fluorescens (strain ATCC BAA-477 / NRRL B-23932 / Pf-5).